The chain runs to 340 residues: 4-dimethylallyltryptophan N-methyltransferase easF (340 aa).

The protein belongs to the methyltransferase superfamily. In terms of assembly, homodimer.

The catalysed reaction is 4-(3-methylbut-2-enyl)-L-tryptophan + S-adenosyl-L-methionine = 4-(3-methylbut-2-enyl)-L-abrine + S-adenosyl-L-homocysteine + H(+). Its pathway is alkaloid biosynthesis; ergot alkaloid biosynthesis. In terms of biological role, 4-dimethylallyltryptophan N-methyltransferase; part of the gene cluster that mediates the biosynthesis of fungal ergot alkaloid. DmaW catalyzes the first step of ergot alkaloid biosynthesis by condensing dimethylallyl diphosphate (DMAP) and tryptophan to form 4-dimethylallyl-L-tryptophan. The second step is catalyzed by the methyltransferase easF that methylates 4-dimethylallyl-L-tryptophan in the presence of S-adenosyl-L-methionine, resulting in the formation of 4-dimethylallyl-L-abrine. The catalase easC and the FAD-dependent oxidoreductase easE then transform 4-dimethylallyl-L-abrine to chanoclavine-I which is further oxidized by easD in the presence of NAD(+), resulting in the formation of chanoclavine-I aldehyde. Chanoclavine-I aldehyde is the precursor of ergoamides and ergopeptines in Clavicipitaceae, and clavine-type alcaloids such as fumiclavine in Trichocomaceae. However, the metabolites downstream of chanoclavine-I aldehyde in Arthrodermataceae have not been identified yet. This is 4-dimethylallyltryptophan N-methyltransferase easF from Trichophyton verrucosum (strain HKI 0517).